A 501-amino-acid chain; its full sequence is MQDTVTTSALLDPSHSSVSTQDNSSTGGHTSSTSPQLSKPSITPVPAKSRNPHPRANIRRMRRIIAEDPEWSLAIVPLLTELCIQHIIRNFQKNPILKQMLPEHQQKVLNHLSPDLPLAVTANLIDSENYWLRCCMHRWPVCHVAHHGGSWKRMFFERHLENLLKHFIPGTTDPAVILDLLPLCRNYVRRVHVDQFLPPVQLPAQLRPGDQSDSGSEGEMEEPTVDHYQLGDLVAGLSHLEELDLVYDVKDCGMNFEWNLFLFTYRDCLSLAAAIKACHTLKIFKLTRSKVDDDKARIIIRSLLDHPVLEELDLSQNLIGDRGARGAAKLLSHSRLRVLNLANNQVRAPGAQSLAHALAHNTNLISLNLRLNCIEDEGGQALAHALQTNKCLTTLHLGGNELSEPTATLLSQVLAINTTLTSINLSCNHIGLDGGKQLLEGMSDNKTLLEFDLRLSDVAQESEYLIGQALYANREAARQRALNPSHFMSTITANGPENSVG.

Over residues 1–23 (MQDTVTTSALLDPSHSSVSTQDN) the composition is skewed to polar residues. Disordered regions lie at residues 1–56 (MQDT…HPRA) and 202–222 (LPAQLRPGDQSDSGSEGEMEE). A compositionally biased stretch (low complexity) spans 24–34 (SSTGGHTSSTS). 5 LRR repeats span residues 308–321 (VLEELDLSQNLIGD), 335–355 (RLRVLNLANNQVRAPGAQSLA), 363–383 (NLISLNLRLNCIEDEGGQALA), 391–411 (CLTTLHLGGNELSEPTATLLS), and 419–439 (TLTSINLSCNHIGLDGGKQLL).

Belongs to the DRC5 family. Component of the nexin-dynein regulatory complex (N-DRC). Interacts with DRC1. Interacts with FBXL13/DRC6, DRC3 and DRC7.

It localises to the cell projection. It is found in the cilium. The protein localises to the flagellum. The protein resides in the cytoplasm. Its subcellular location is the cytoskeleton. It localises to the flagellum axoneme. Functionally, component of the nexin-dynein regulatory complex (N-DRC) a key regulator of ciliary/flagellar motility which maintains the alignment and integrity of the distal axoneme and regulates microtubule sliding in motile axonemes. May play a role in the assembly of N-DRC. May be required for sperm motility. This chain is Dynein regulatory complex subunit 5 (TCTE1), found in Homo sapiens (Human).